We begin with the raw amino-acid sequence, 422 residues long: Protein FAM53B (422 aa).

Phosphoserine is present on residues Ser118, Ser167, Ser169, Ser179, Ser212, and Ser268. The segment covering 245–268 (SANSTPASTPELARRSSGLSRSRS) has biased composition (low complexity). The tract at residues 245 to 269 (SANSTPASTPELARRSSGLSRSRSQ) is disordered. A Nuclear localization signal motif is present at residues 281 to 284 (KRRR).

Belongs to the FAM53 family. Interacts with CTNNB1. In terms of tissue distribution, detected in skeletal muscle, kidney, spleen, thyroid, testis, ovary, small intestine, colon and peripheral blood.

The protein resides in the nucleus. Acts as a regulator of Wnt signaling pathway by regulating beta-catenin (CTNNB1) nuclear localization. The chain is Protein FAM53B from Homo sapiens (Human).